Reading from the N-terminus, the 241-residue chain is MHQFQQDNQYFIFNFDRTFEQATEFFQAEFWQKQERVIGSAKGRGTTYFLQTEDWFGVNCALRHYYRGGLWGKLNKDRYRFSALETTRSFAEFHLLQRLYEAGLPVPKPIAARIQKGKLGICYQADILTEKIENAQDLTALLQTQTLPKETWRQIGRLIRKLHDLQICHTDLNAHNILLQQAEQEQKCWLIDFDKCGKKSGDFWKAQNLNRLKRSFEKEVGRMNIQFTEQNWADLTAAYHQ.

D171 is a catalytic residue.

Belongs to the protein kinase superfamily. KdkA/RfaP family.

Its subcellular location is the cell inner membrane. It carries out the reaction an alpha-Kdo-(2-&gt;6)-lipid IVA + ATP = a 4-O-phospho-alpha-Kdo-(2-&gt;6)-lipid IVA + ADP + H(+). The protein operates within bacterial outer membrane biogenesis; LPS core biosynthesis. Its function is as follows. Catalyzes the ATP-dependent phosphorylation of the 3-deoxy-D-manno-octulosonic acid (Kdo) residue in Kdo-lipid IV(A) at the 4-OH position. The polypeptide is 3-deoxy-D-manno-octulosonic acid kinase (Haemophilus influenzae (strain 86-028NP)).